The primary structure comprises 148 residues: UPF0756 membrane protein NGK_2061 (148 aa).

4 consecutive transmembrane segments (helical) span residues 10–32, 50–70, 85–105, and 116–136; these read LVTLILLGVVSNNNSITVSATIL, HGLNLGIILLTIGVLSPLVSG, MISAVFIGIFVAWLAGCGVPL, and LLIGTVIGVAFMGGIPVGPLI.

The protein belongs to the UPF0756 family.

The protein localises to the cell membrane. The sequence is that of UPF0756 membrane protein NGK_2061 from Neisseria gonorrhoeae (strain NCCP11945).